The chain runs to 492 residues: Amphoterin-induced protein 1 (492 aa).

A signal peptide spans 1 to 27 (MQPQRDLRGLWLLLLSVFLLLFEVARA). The LRRNT domain maps to 28 to 61 (GRSVVSCPANCLCASNILSCSKQQLPNVPQSLPS). At 28–371 (GRSVVSCPAN…LHGHHDTLNT (344 aa)) the chain is on the extracellular side. Intrachain disulfides connect cysteine 34/cysteine 40 and cysteine 38/cysteine 47. 6 LRR repeats span residues 62 to 83 (YTAL…WTPT), 87 to 108 (NLHS…AFVP), 111 to 132 (NLRY…LFSD), 135 to 156 (ALEV…AFED), 159 to 180 (QLQK…LIKD), and 186 to 206 (KLML…TDLQ). Asparagine 72 carries an N-linked (GlcNAc...) asparagine glycan. Residues 208-272 (LPAWVKNGLY…FSLDFFNCSE (65 aa)) form the LRRCT domain. 3 cysteine pairs are disulfide-bonded: cysteine 225–cysteine 253, cysteine 227–cysteine 270, and cysteine 290–cysteine 340. N-linked (GlcNAc...) asparagine glycosylation is found at asparagine 269, asparagine 315, asparagine 348, and asparagine 359. An Ig-like C2-type domain is found at 269 to 352 (NCSEYKESAW…MGETFNETLS (84 aa)). A helical membrane pass occupies residues 372-392 (AYTTLVGCILSVVLVLIYLYL). The Cytoplasmic segment spans residues 393–492 (TPCRCWCRGV…SVFSDTPIVV (100 aa)). Residues 404 to 492 (KPSSHQGDSL…SVFSDTPIVV (89 aa)) form a disordered region. The segment covering 407–423 (SHQGDSLSSSMLSTTPN) has biased composition (polar residues). The segment covering 430–441 (GDKDDGFDRRVA) has biased composition (basic and acidic residues). Serine 476 and serine 480 each carry phosphoserine.

It belongs to the immunoglobulin superfamily. AMIGO family. In terms of assembly, homodimer, and heterodimer with AMIGO2 and AMIGO3. Interacts with KCNB1. In terms of tissue distribution, expressed in hippocampal and cortical neurons (at protein level). High levels in cerebellum, cerebrum, and retina. Low levels in liver, kidney, small intestine, spleen, lung and heart.

It localises to the cell membrane. It is found in the perikaryon. The protein resides in the cell projection. Its subcellular location is the dendrite. Its function is as follows. Promotes growth and fasciculation of neurites from cultured hippocampal neurons. May be involved in fasciculation as well as myelination of developing neural axons. May have a role in regeneration as well as neural plasticity in the adult nervous system. May mediate homophilic as well as heterophilic cell-cell interaction and contribute to signal transduction through its intracellular domain. Assembled with KCNB1 modulates the gating characteristics of the delayed rectifier voltage-dependent potassium channel KCNB1. The sequence is that of Amphoterin-induced protein 1 from Mus musculus (Mouse).